Consider the following 75-residue polypeptide: Small ribosomal subunit protein bS18 (75 aa).

The protein belongs to the bacterial ribosomal protein bS18 family. In terms of assembly, part of the 30S ribosomal subunit. Forms a tight heterodimer with protein bS6.

Its function is as follows. Binds as a heterodimer with protein bS6 to the central domain of the 16S rRNA, where it helps stabilize the platform of the 30S subunit. The chain is Small ribosomal subunit protein bS18 from Clostridioides difficile (strain 630) (Peptoclostridium difficile).